The following is a 378-amino-acid chain: Quinolinate synthase (378 aa).

His-59 and Ser-80 together coordinate iminosuccinate. Cys-125 provides a ligand contact to [4Fe-4S] cluster. Residues 151–153 (YAN) and Ser-168 contribute to the iminosuccinate site. Position 212 (Cys-212) interacts with [4Fe-4S] cluster. Iminosuccinate contacts are provided by residues 238 to 240 (HPE) and Thr-255. Residue Cys-309 participates in [4Fe-4S] cluster binding.

It belongs to the quinolinate synthase family. Type 1 subfamily. [4Fe-4S] cluster is required as a cofactor.

It localises to the cytoplasm. It carries out the reaction iminosuccinate + dihydroxyacetone phosphate = quinolinate + phosphate + 2 H2O + H(+). Its pathway is cofactor biosynthesis; NAD(+) biosynthesis; quinolinate from iminoaspartate: step 1/1. In terms of biological role, catalyzes the condensation of iminoaspartate with dihydroxyacetone phosphate to form quinolinate. This chain is Quinolinate synthase, found in Burkholderia orbicola (strain MC0-3).